The chain runs to 126 residues: Small ribosomal subunit protein uS13 (126 aa).

Residues leucine 99–lysine 126 form a disordered region. Residues alanine 108 to lysine 126 are compositionally biased toward basic residues.

The protein belongs to the universal ribosomal protein uS13 family. Part of the 30S ribosomal subunit. Forms a loose heterodimer with protein S19. Forms two bridges to the 50S subunit in the 70S ribosome.

In terms of biological role, located at the top of the head of the 30S subunit, it contacts several helices of the 16S rRNA. In the 70S ribosome it contacts the 23S rRNA (bridge B1a) and protein L5 of the 50S subunit (bridge B1b), connecting the 2 subunits; these bridges are implicated in subunit movement. Contacts the tRNAs in the A and P-sites. This Porphyromonas gingivalis (strain ATCC 33277 / DSM 20709 / CIP 103683 / JCM 12257 / NCTC 11834 / 2561) protein is Small ribosomal subunit protein uS13.